The primary structure comprises 162 residues: Proepiregulin (162 aa).

Positions 1–22 (METLPASWVLTLLCLGSHLLQA) are cleaved as a signal peptide. Residues 23–55 (VISTTVIPSCIPGESEDNCTALVQMEDDPRVAQ) constitute a propeptide that is removed on maturation. N-linked (GlcNAc...) asparagine glycosylation occurs at Asn40. Over 53 to 112 (VAQVQITKCSSDMDGYCLHGQCIYLVDMREKFCRCEVGYTGLRCEHFFLTVHQPLSKEYV) the chain is Extracellular. Positions 57 to 97 (QITKCSSDMDGYCLHGQCIYLVDMREKFCRCEVGYTGLRCE) constitute an EGF-like domain. 3 disulfide bridges follow: Cys61/Cys74, Cys69/Cys85, and Cys87/Cys96. A propeptide spans 102-162 (TVHQPLSKEY…TSGDPVLPQV (61 aa)) (removed in mature form). A helical transmembrane segment spans residues 113 to 133 (ALTVILIFLFLIITAGCIYYF). At 134–162 (CRWYKNRKSKKSREEYERVTSGDPVLPQV) the chain is on the cytoplasmic side.

In terms of assembly, interacts with EGFR and ERBB4.

It is found in the secreted. The protein localises to the extracellular space. Its subcellular location is the cell membrane. Its function is as follows. Ligand of the EGF receptor/EGFR and ERBB4. Stimulates EGFR and ERBB4 tyrosine phosphorylation. Contributes to inflammation, wound healing, tissue repair, and oocyte maturation by regulating angiogenesis and vascular remodeling and by stimulating cell proliferation. The chain is Proepiregulin (Ereg) from Mus musculus (Mouse).